The sequence spans 164 residues: Peptide deformylase (164 aa).

Fe cation contacts are provided by cysteine 87 and histidine 129. Residue glutamate 130 is part of the active site. Histidine 133 contacts Fe cation.

The protein belongs to the polypeptide deformylase family. The cofactor is Fe(2+).

The catalysed reaction is N-terminal N-formyl-L-methionyl-[peptide] + H2O = N-terminal L-methionyl-[peptide] + formate. Its function is as follows. Removes the formyl group from the N-terminal Met of newly synthesized proteins. Requires at least a dipeptide for an efficient rate of reaction. N-terminal L-methionine is a prerequisite for activity but the enzyme has broad specificity at other positions. This Thermotoga petrophila (strain ATCC BAA-488 / DSM 13995 / JCM 10881 / RKU-1) protein is Peptide deformylase.